We begin with the raw amino-acid sequence, 241 residues long: Lipopolysaccharide export system ATP-binding protein LptB (241 aa).

Residues 4 to 237 enclose the ABC transporter domain; the sequence is LTAKNLAKAY…EHVKRVYLGE (234 aa). Residue 36-43 participates in ATP binding; that stretch reads GPNGAGKT.

It belongs to the ABC transporter superfamily. Outer membrane lipopolysaccharide export (TC 1.B.42) family. In terms of assembly, component of the lipopolysaccharide transport and assembly complex. The LptBFG transporter is composed of two ATP-binding proteins (LptB) and two transmembrane proteins (LptF and LptG).

The protein localises to the cytoplasm. It is found in the cell inner membrane. In terms of biological role, part of the ABC transporter complex LptBFG involved in the translocation of lipopolysaccharide (LPS) from the inner membrane to the outer membrane. Probably responsible for energy coupling to the transport system. The sequence is that of Lipopolysaccharide export system ATP-binding protein LptB (lptB) from Escherichia coli O157:H7.